The following is a 447-amino-acid chain: Signal recognition particle 54 kDa protein (447 aa).

Residues 103 to 110 (GVQGSGKT), 185 to 189 (DTAGR), and 245 to 248 (TKMD) each bind GTP.

The protein belongs to the GTP-binding SRP family. SRP54 subfamily. As to quaternary structure, part of the signal recognition particle protein translocation system, which is composed of SRP and FtsY. Archaeal SRP consists of a 7S RNA molecule of 300 nucleotides and two protein subunits: SRP54 and SRP19.

The protein localises to the cytoplasm. It catalyses the reaction GTP + H2O = GDP + phosphate + H(+). Functionally, involved in targeting and insertion of nascent membrane proteins into the cytoplasmic membrane. Binds to the hydrophobic signal sequence of the ribosome-nascent chain (RNC) as it emerges from the ribosomes. The SRP-RNC complex is then targeted to the cytoplasmic membrane where it interacts with the SRP receptor FtsY. The sequence is that of Signal recognition particle 54 kDa protein from Saccharolobus islandicus (strain Y.G.57.14 / Yellowstone #1) (Sulfolobus islandicus).